Reading from the N-terminus, the 562-residue chain is Nucleoprotein (562 aa).

The tract at residues 53–238 (MRRVKRDDSD…ITQEESQINI (186 aa)) is binding site for the cap structure m7GTP. The Mn(2+) site is built by aspartate 381 and glutamate 383. Residues glutamate 391, cysteine 498, histidine 501, and cysteine 522 each contribute to the Zn(2+) site. Aspartate 526 is a binding site for Mn(2+).

The protein belongs to the arenaviridae nucleocapsid protein family. As to quaternary structure, homomultimerizes to form the nucleocapsid. Binds to viral genomic RNA. Interacts with glycoprotein G2. Interacts with protein Z; this interaction probably directs the encapsidated genome to budding sites. Interacts with protein L; this interaction does not interfere with Z-L interaction. Interacts with host IKBKE (via Protein kinase domain); the interaction inhibits IKBKE kinase activity.

The protein resides in the virion. It is found in the host cytoplasm. Encapsidates the genome, protecting it from nucleases. The encapsidated genomic RNA is termed the nucleocapsid (NC). Serves as template for viral transcription and replication. The increased presence of protein N in host cell does not seem to trigger the switch from transcription to replication as observed in other negative strain RNA viruses. Through the interaction with host IKBKE, strongly inhibits the phosphorylation and nuclear translocation of host IRF3, a protein involved in interferon activation pathway, leading to the inhibition of interferon-beta and IRF3-dependent promoters activation. Also encodes a functional 3'-5' exoribonuclease that degrades preferentially dsRNA substrates and thereby participates in the suppression of interferon induction. This chain is Nucleoprotein, found in Neotoma (wood rats).